A 1819-amino-acid chain; its full sequence is Non-reducing polyketide synthase nscA (1819 aa).

Residues 25 to 277 form an N-terminal acylcarrier protein transacylase domain (SAT) region; the sequence is RRLDQHSKDR…PLPVYDGLCH (253 aa). A Ketosynthase family 3 (KS3) domain is found at 413–846; the sequence is SSKLAIVGMA…GGNTTLLLED (434 aa). Residues cysteine 586, histidine 721, and histidine 764 each act as for beta-ketoacyl synthase activity in the active site. The interval 952-1249 is malonyl-CoA:ACP transacylase (MAT) domain; sequence FTSQGAYYHG…MIPSAPAMSS (298 aa). Residues 1339–1658 are product template (PT) domain; the sequence is TSLVHQITAE…RLLMDRFFSP (320 aa). The interval 1343–1479 is N-terminal hotdog fold; the sequence is HQITAETVEA…AMIRFEDPMA (137 aa). The PKS/mFAS DH domain maps to 1343–1653; the sequence is HQITAETVEA…IRRVPRLLMD (311 aa). The active-site Proton acceptor; for dehydratase activity is histidine 1375. The tract at residues 1507–1653 is C-terminal hotdog fold; that stretch reads ASRLSKPLAY…IRRVPRLLMD (147 aa). Aspartate 1564 acts as the Proton donor; for dehydratase activity in catalysis. The tract at residues 1703–1742 is disordered; it reads SSTMASKAPEPAPLLATSSESSTPKESPIVTPAESEREDP. Low complexity predominate over residues 1719–1730; sequence TSSESSTPKESP. Positions 1742–1819 constitute a Carrier domain; that stretch reads PVDNNMISQC…EMTAWIEEYC (78 aa). The residue at position 1779 (serine 1779) is an O-(pantetheine 4'-phosphoryl)serine.

The cofactor is pantetheine 4'-phosphate.

The protein operates within secondary metabolite biosynthesis. In terms of biological role, non-reducing polyketide synthase; part of the gene cluster that mediates the biosynthesis of neosartoricin B, a prenylated anthracenone that probably exhibits T-cell antiproliferative activity, suggestive of a physiological role as an immunosuppressive agent. The non-reducing polyketide synthase nscA probably synthesizes and cyclizes the decaketide backbone. The hydrolase nscB then mediates the product release through hydrolysis followed by spontaneous decarboxylation. The prenyltransferase nscD catalyzes the addition of the dimethylallyl group to the aromatic C5. The FAD-dependent monooxygenase nscC is then responsible for the stereospecific hydroxylation at C2. Neosartoricin B can be converted into two additional compounds neosartoricins C and D. Neosartoricin C is a spirocyclic compound that is cyclized through the attack of C3 hydroxyl on C14, followed by dehydration. On the other hand, neosartoricin D is a further cyclized compound in which attack of C2 on C14 in neosartoricin C results in the formation of the acetal-containing dioxabicyclo-octanone ring. Both of these compounds are novel and possibly represent related metabolites of the gene cluster. The polypeptide is Non-reducing polyketide synthase nscA (Trichophyton verrucosum (strain HKI 0517)).